Reading from the N-terminus, the 833-residue chain is Leucine--tRNA ligase (833 aa).

The 'HIGH' region signature appears at 41-52 (PYPSGAGLHVGH). Residues 610 to 614 (KMSKS) carry the 'KMSKS' region motif. Lysine 613 provides a ligand contact to ATP.

This sequence belongs to the class-I aminoacyl-tRNA synthetase family.

It is found in the cytoplasm. It catalyses the reaction tRNA(Leu) + L-leucine + ATP = L-leucyl-tRNA(Leu) + AMP + diphosphate. The protein is Leucine--tRNA ligase of Streptococcus pyogenes serotype M4 (strain MGAS10750).